A 227-amino-acid chain; its full sequence is Agamous-like MADS-box protein AGL8 homolog (227 aa).

The region spanning 3–57 is the MADS-box domain; it reads RGRVQLKRIENKINRQVTFSKRRSGLLKKAHEISVLCDAEVGLIVFSTKGKLFEY. Positions 88-178 constitute a K-box domain; that stretch reads PVSWTLEHRK…SKKVKEREKS (91 aa).

As to expression, flower specific.

The protein resides in the nucleus. Probable transcription factor. The sequence is that of Agamous-like MADS-box protein AGL8 homolog (TDR4) from Solanum lycopersicum (Tomato).